We begin with the raw amino-acid sequence, 173 residues long: Transcriptional repressor NrdR (173 aa).

The segment at 3 to 34 is a zinc-finger region; the sequence is CPFCQHADTRVIDSRVSEDGATIRRRRECEAC. The ATP-cone domain occupies 49-139; it reads PAIVKSDGTR…VYRSFEDVAD (91 aa).

Belongs to the NrdR family. The cofactor is Zn(2+).

In terms of biological role, negatively regulates transcription of bacterial ribonucleotide reductase nrd genes and operons by binding to NrdR-boxes. The chain is Transcriptional repressor NrdR from Stenotrophomonas maltophilia (strain R551-3).